Here is a 557-residue protein sequence, read N- to C-terminus: Urocanate hydratase (557 aa).

NAD(+)-binding positions include 53–54, glutamine 131, 177–179, glutamate 197, 243–244, 264–268, 274–275, and tyrosine 323; these read GG, GMG, NA, QTSAH, and YL. Residue cysteine 411 is part of the active site. Glycine 493 serves as a coordination point for NAD(+).

This sequence belongs to the urocanase family. It depends on NAD(+) as a cofactor.

The protein resides in the cytoplasm. The catalysed reaction is 4-imidazolone-5-propanoate = trans-urocanate + H2O. It participates in amino-acid degradation; L-histidine degradation into L-glutamate; N-formimidoyl-L-glutamate from L-histidine: step 2/3. In terms of biological role, catalyzes the conversion of urocanate to 4-imidazolone-5-propionate. This Mesorhizobium japonicum (strain LMG 29417 / CECT 9101 / MAFF 303099) (Mesorhizobium loti (strain MAFF 303099)) protein is Urocanate hydratase.